A 554-amino-acid chain; its full sequence is U4/U6 small nuclear ribonucleoprotein PRP4-like protein (554 aa).

A compositionally biased stretch (pro residues) spans 48-65 (APIPMMPHPPVARPPTFR). The segment at 48 to 99 (APIPMMPHPPVARPPTFRPPVSQNGGVKTSDSDSESDDEHIEISEESKQVRE) is disordered. The segment covering 88–99 (IEISEESKQVRE) has biased composition (basic and acidic residues). 7 WD repeats span residues 253 to 292 (GDDRPLTGCSFSRDGKILATCSLSGVTKLWEMPQVTNTIA), 296 to 335 (DHKERATDVVFSPVDDCLATASADRTAKLWKTDGTLLQTF), 337 to 376 (GHLDRLARVAFHPSGKYLGTTSYDKTWRLWDINTGAELLL), 379 to 418 (GHSRSVYGIAFQQDGALAASCGLDSLARVWDLRTGRSILV), 421 to 460 (GHIKPVFSVNFSPNGYHLASGGEDNQCRIWDLRMRKSLYI), 463 to 503 (AHAN…LVKS), and 506 to 545 (GHESKVASLDITADSSCIATVSHDRTIKLWTSSGNDDEDE).

It localises to the nucleus speckle. Its function is as follows. Participates in pre-mRNA splicing. Part of the U4/U5/U6 tri-snRNP complex, one of the building blocks of the spliceosome. Essential for reproduction. In female gametophyte, is necessary for the egg cell and central cell fate determination and hence reproductive success. Involved in a mechanism that prevents accessory cells from adopting gametic cell fate. Modulates egg cell signaling center that regulates the development of all female gametophytic cells. This chain is U4/U6 small nuclear ribonucleoprotein PRP4-like protein, found in Arabidopsis thaliana (Mouse-ear cress).